A 225-amino-acid polypeptide reads, in one-letter code: Urease accessory protein UreF (225 aa).

It belongs to the UreF family. As to quaternary structure, ureD, UreF and UreG form a complex that acts as a GTP-hydrolysis-dependent molecular chaperone, activating the urease apoprotein by helping to assemble the nickel containing metallocenter of UreC. The UreE protein probably delivers the nickel.

It localises to the cytoplasm. In terms of biological role, required for maturation of urease via the functional incorporation of the urease nickel metallocenter. In Picosynechococcus sp. (strain ATCC 27264 / PCC 7002 / PR-6) (Agmenellum quadruplicatum), this protein is Urease accessory protein UreF.